A 356-amino-acid chain; its full sequence is Fructose-1,6-bisphosphatase class 1 (356 aa).

Residues Glu91, Asp113, Leu115, and Asp116 each coordinate Mg(2+). Substrate contacts are provided by residues 116-119 and Asn208; that span reads DGSS. Glu280 serves as a coordination point for Mg(2+).

It belongs to the FBPase class 1 family. In terms of assembly, homotetramer. Mg(2+) serves as cofactor.

It localises to the cytoplasm. It catalyses the reaction beta-D-fructose 1,6-bisphosphate + H2O = beta-D-fructose 6-phosphate + phosphate. It functions in the pathway carbohydrate biosynthesis; gluconeogenesis. The polypeptide is Fructose-1,6-bisphosphatase class 1 (Methylacidiphilum infernorum (isolate V4) (Methylokorus infernorum (strain V4))).